Here is a 233-residue protein sequence, read N- to C-terminus: Large ribosomal subunit protein uL1 (233 aa).

The protein belongs to the universal ribosomal protein uL1 family. As to quaternary structure, part of the 50S ribosomal subunit.

Its function is as follows. Binds directly to 23S rRNA. The L1 stalk is quite mobile in the ribosome, and is involved in E site tRNA release. Functionally, protein L1 is also a translational repressor protein, it controls the translation of the L11 operon by binding to its mRNA. The chain is Large ribosomal subunit protein uL1 from Polynucleobacter asymbioticus (strain DSM 18221 / CIP 109841 / QLW-P1DMWA-1) (Polynucleobacter necessarius subsp. asymbioticus).